The primary structure comprises 256 residues: V-type proton ATPase subunit D (256 aa).

The span at 211 to 230 shows a compositional bias: basic and acidic residues; it reads QNETAKLDAEMKLKRDRAEQ. Residues 211–256 are disordered; sequence QNETAKLDAEMKLKRDRAEQDASEVAADEEPQGETLVADQEDDVIF.

The protein belongs to the V-ATPase D subunit family. As to quaternary structure, V-ATPase is a heteromultimeric enzyme composed of a peripheral catalytic V1 complex (components A to H) attached to an integral membrane V0 proton pore complex (components: a, c, c', c'', d, e, f and VOA1). Interacts with RAV1 and RAV2 components of the RAVE complex, which are essential for the stability and assembly of V-ATPase.

The protein resides in the vacuole membrane. In terms of biological role, subunit of the V1 complex of vacuolar(H+)-ATPase (V-ATPase), a multisubunit enzyme composed of a peripheral complex (V1) that hydrolyzes ATP and a membrane integral complex (V0) that translocates protons. V-ATPase is responsible for acidifying and maintaining the pH of intracellular compartments. The polypeptide is V-type proton ATPase subunit D (Saccharomyces cerevisiae (strain ATCC 204508 / S288c) (Baker's yeast)).